The chain runs to 230 residues: Small ribosomal subunit protein uS3c (230 aa).

Residues 39 to 109 (IRSFIHGKLS…QIRVNVVEIS (71 aa)) enclose the KH type-2 domain.

This sequence belongs to the universal ribosomal protein uS3 family. In terms of assembly, part of the 30S ribosomal subunit.

The protein resides in the plastid. It localises to the chloroplast. The chain is Small ribosomal subunit protein uS3c (rps3) from Porphyra purpurea (Red seaweed).